Here is a 735-residue protein sequence, read N- to C-terminus: Catalase-peroxidase (735 aa).

The tract at residues 1–25 (MSDSKCPVTGKSSRQVAGGGTSNRD) is disordered. Positions 95–223 (WHSAGTYRMG…LAAVQMGLIY (129 aa)) form a cross-link, tryptophyl-tyrosyl-methioninium (Trp-Tyr) (with M-249). His-96 acts as the Proton acceptor in catalysis. Positions 223-249 (YINPEGPDGNPDPVASGRDVRETFARM) form a cross-link, tryptophyl-tyrosyl-methioninium (Tyr-Met) (with W-95). Heme b is bound at residue His-264.

Belongs to the peroxidase family. Peroxidase/catalase subfamily. In terms of assembly, homodimer or homotetramer. The cofactor is heme b. Formation of the three residue Trp-Tyr-Met cross-link is important for the catalase, but not the peroxidase activity of the enzyme.

The enzyme catalyses H2O2 + AH2 = A + 2 H2O. It catalyses the reaction 2 H2O2 = O2 + 2 H2O. Bifunctional enzyme with both catalase and broad-spectrum peroxidase activity. This Trichlorobacter lovleyi (strain ATCC BAA-1151 / DSM 17278 / SZ) (Geobacter lovleyi) protein is Catalase-peroxidase.